Consider the following 407-residue polypeptide: P2X receptor D (407 aa).

Topologically, residues 1–22 are cytoplasmic; sequence MDWDNIFSYNTAKIVTIKDRRL. A helical transmembrane segment spans residues 23–43; the sequence is GGLHIIFMVLIIVYIVIYSTI. The Lumenal segment spans residues 44–300; it reads YKKGYLLTET…IQNGEIGSFN (257 aa). The pore-forming motif stretch occupies residues 283–296; the sequence is RHGIRLIFIQNGEI. A helical membrane pass occupies residues 301 to 321; that stretch reads FQALLLTFVSGLGLLAISTVL. The Cytoplasmic segment spans residues 322-407; that stretch reads VDQLAIRFLP…QNIQNNNIIL (86 aa). The segment at 371 to 394 is disordered; that stretch reads KNNENNNNNDDYNDDDNEIFDDNN. Residues 381 to 391 are compositionally biased toward acidic residues; sequence DYNDDDNEIFD.

It belongs to the P2X receptor family.

It is found in the contractile vacuole membrane. Its function is as follows. P2X receptors are ligand-gated ion channels that play a role in intracellular calcium signaling. ATP does not evoke inward currents in p2xD. Not essential for osmoregulation. The chain is P2X receptor D (p2xD) from Dictyostelium discoideum (Social amoeba).